Here is a 187-residue protein sequence, read N- to C-terminus: Peptidyl-tRNA hydrolase (187 aa).

Position 15 (Tyr15) interacts with tRNA. The active-site Proton acceptor is His20. Residues Tyr64, Asn66, and Asn112 each coordinate tRNA.

The protein belongs to the PTH family. Monomer.

Its subcellular location is the cytoplasm. The catalysed reaction is an N-acyl-L-alpha-aminoacyl-tRNA + H2O = an N-acyl-L-amino acid + a tRNA + H(+). Its function is as follows. Hydrolyzes ribosome-free peptidyl-tRNAs (with 1 or more amino acids incorporated), which drop off the ribosome during protein synthesis, or as a result of ribosome stalling. Catalyzes the release of premature peptidyl moieties from peptidyl-tRNA molecules trapped in stalled 50S ribosomal subunits, and thus maintains levels of free tRNAs and 50S ribosomes. In Phocaeicola vulgatus (strain ATCC 8482 / DSM 1447 / JCM 5826 / CCUG 4940 / NBRC 14291 / NCTC 11154) (Bacteroides vulgatus), this protein is Peptidyl-tRNA hydrolase.